The chain runs to 264 residues: 3-methyl-2-oxobutanoate hydroxymethyltransferase (264 aa).

Residues Asp-45 and Asp-84 each contribute to the Mg(2+) site. Residues 45-46 (DS), Asp-84, and Lys-112 contribute to the 3-methyl-2-oxobutanoate site. Position 114 (Glu-114) interacts with Mg(2+). Glu-181 (proton acceptor) is an active-site residue.

This sequence belongs to the PanB family. Homodecamer; pentamer of dimers. Requires Mg(2+) as cofactor.

It localises to the cytoplasm. The catalysed reaction is 3-methyl-2-oxobutanoate + (6R)-5,10-methylene-5,6,7,8-tetrahydrofolate + H2O = 2-dehydropantoate + (6S)-5,6,7,8-tetrahydrofolate. It participates in cofactor biosynthesis; (R)-pantothenate biosynthesis; (R)-pantoate from 3-methyl-2-oxobutanoate: step 1/2. Catalyzes the reversible reaction in which hydroxymethyl group from 5,10-methylenetetrahydrofolate is transferred onto alpha-ketoisovalerate to form ketopantoate. The chain is 3-methyl-2-oxobutanoate hydroxymethyltransferase from Shigella flexneri serotype 5b (strain 8401).